We begin with the raw amino-acid sequence, 202 residues long: uncharacterized protein (202 aa).

The helical transmembrane segment at 18–38 threads the bilayer; it reads FLIFLIFLSVLGCGITISGCI.

It localises to the membrane. This is an uncharacterized protein from Methanocaldococcus jannaschii (strain ATCC 43067 / DSM 2661 / JAL-1 / JCM 10045 / NBRC 100440) (Methanococcus jannaschii).